The primary structure comprises 313 residues: tRNA dimethylallyltransferase (313 aa).

Position 10–17 (10–17) interacts with ATP; the sequence is GPTASGKT. 12-17 serves as a coordination point for substrate; sequence TASGKT. 3 interaction with substrate tRNA regions span residues 35 to 38, 159 to 163, and 240 to 245; these read DSAM, QRIQR, and RCVGYR.

This sequence belongs to the IPP transferase family. Monomer. It depends on Mg(2+) as a cofactor.

The catalysed reaction is adenosine(37) in tRNA + dimethylallyl diphosphate = N(6)-dimethylallyladenosine(37) in tRNA + diphosphate. In terms of biological role, catalyzes the transfer of a dimethylallyl group onto the adenine at position 37 in tRNAs that read codons beginning with uridine, leading to the formation of N6-(dimethylallyl)adenosine (i(6)A). The polypeptide is tRNA dimethylallyltransferase (Legionella pneumophila (strain Lens)).